The sequence spans 463 residues: MKQQAKSRKPQQPEYIFQVETLSHEGRGIAHYGSHPDHPADKHGKKVFIRYALPGETVKAQITHEAKRLEEAEMVALLAEPSANRVEAVCPHYGICGGCSMQHIHPDEQIRLKQNVLQSHLQHFAGIQPEQWLEPIRSLQSDYRRRARIGVRYLPKQDRLILGFREHHSNRLTSIHTCSVLDKKLSDSLPELRNLLQSLKGKVHIGHVELAKGDHETSLLVRHIEKLNNADVNQLRQFALHKGWQLYLQPKGPESLRRIDEEQGAMRLHYALNAFDVNFAFSPLDFTQVNATVNEQMVQLACELLQLQQGERVLDLFCGLGNFSLPLARCVGAKGVIVGVEASEEMVQRATDNVKRNNLVQASFFSQDLTKDFSHHSWANQGFDALLIDPPRAGAYEIIQYVPNFGAKRIVYVSCNPATLARDAGVLVQHGYQLKKAAVMDMFTHTEHVESIALFEKIQEIND.

The 71-residue stretch at 6-76 (KSRKPQQPEY…KRLEEAEMVA (71 aa)) folds into the TRAM domain. [4Fe-4S] cluster-binding residues include cysteine 90, cysteine 96, cysteine 99, and cysteine 178. Residues glutamine 288, phenylalanine 317, asparagine 322, glutamate 341, aspartate 368, and aspartate 389 each contribute to the S-adenosyl-L-methionine site. The active-site Nucleophile is cysteine 415.

The protein belongs to the class I-like SAM-binding methyltransferase superfamily. RNA M5U methyltransferase family. RlmD subfamily.

It catalyses the reaction uridine(1939) in 23S rRNA + S-adenosyl-L-methionine = 5-methyluridine(1939) in 23S rRNA + S-adenosyl-L-homocysteine + H(+). In terms of biological role, catalyzes the formation of 5-methyl-uridine at position 1939 (m5U1939) in 23S rRNA. The sequence is that of 23S rRNA (uracil(1939)-C(5))-methyltransferase RlmD from Acinetobacter baumannii (strain SDF).